Here is a 118-residue protein sequence, read N- to C-terminus: BolA-like protein 3 (118 aa).

Belongs to the BolA/IbaG family. As to quaternary structure, interacts with NFU1.

Its subcellular location is the mitochondrion matrix. Acts as a mitochondrial iron-sulfur (Fe-S) cluster assembly factor that facilitates [4Fe-4S] cluster insertion into a subset of mitochondrial proteins such as lipoyl synthase (LS) and succinate dehydrogenase (SDH). Required during the last step of iron-sulfur protein assembly when the iron-sulfur cluster is inserted into the target protein. Acts together with NFU1, later than BOL1 and GRX5 in the [4Fe-4S] cluster insertion process. Not required for [2Fe-2S] cluster insertion into mitochondrial proteins. This Saccharomyces cerevisiae (strain ATCC 204508 / S288c) (Baker's yeast) protein is BolA-like protein 3.